Reading from the N-terminus, the 251-residue chain is Pyrroloquinoline-quinone synthase (251 aa).

The protein belongs to the PqqC family.

It carries out the reaction 6-(2-amino-2-carboxyethyl)-7,8-dioxo-1,2,3,4,7,8-hexahydroquinoline-2,4-dicarboxylate + 3 O2 = pyrroloquinoline quinone + 2 H2O2 + 2 H2O + H(+). The protein operates within cofactor biosynthesis; pyrroloquinoline quinone biosynthesis. In terms of biological role, ring cyclization and eight-electron oxidation of 3a-(2-amino-2-carboxyethyl)-4,5-dioxo-4,5,6,7,8,9-hexahydroquinoline-7,9-dicarboxylic-acid to PQQ. This chain is Pyrroloquinoline-quinone synthase, found in Pseudomonas putida (strain ATCC 47054 / DSM 6125 / CFBP 8728 / NCIMB 11950 / KT2440).